We begin with the raw amino-acid sequence, 270 residues long: Proteasome subunit alpha (270 aa).

The interval 229–270 (LLDTEAAGSTPTDAPSDTEDGDSTDGTDRADGTTDSTEETEK) is disordered. The span at 244–253 (SDTEDGDSTD) shows a compositional bias: acidic residues.

It belongs to the peptidase T1A family. In terms of assembly, the 20S proteasome core is composed of 14 alpha and 14 beta subunits that assemble into four stacked heptameric rings, resulting in a barrel-shaped structure. The two inner rings, each composed of seven catalytic beta subunits, are sandwiched by two outer rings, each composed of seven alpha subunits. The catalytic chamber with the active sites is on the inside of the barrel. Has a gated structure, the ends of the cylinder being occluded by the N-termini of the alpha-subunits. Is capped by the proteasome-associated ATPase, ARC.

The protein localises to the cytoplasm. Its pathway is protein degradation; proteasomal Pup-dependent pathway. The formation of the proteasomal ATPase ARC-20S proteasome complex, likely via the docking of the C-termini of ARC into the intersubunit pockets in the alpha-rings, may trigger opening of the gate for substrate entry. Interconversion between the open-gate and close-gate conformations leads to a dynamic regulation of the 20S proteasome proteolysis activity. Its function is as follows. Component of the proteasome core, a large protease complex with broad specificity involved in protein degradation. The sequence is that of Proteasome subunit alpha from Streptomyces griseus subsp. griseus (strain JCM 4626 / CBS 651.72 / NBRC 13350 / KCC S-0626 / ISP 5235).